A 431-amino-acid polypeptide reads, in one-letter code: UDP-N-acetylglucosamine 1-carboxyvinyltransferase (431 aa).

22-23 (KN) contributes to the phosphoenolpyruvate binding site. A UDP-N-acetyl-alpha-D-glucosamine-binding site is contributed by arginine 102. The active-site Proton donor is the cysteine 126. 2-(S-cysteinyl)pyruvic acid O-phosphothioketal is present on cysteine 126. UDP-N-acetyl-alpha-D-glucosamine contacts are provided by aspartate 318 and isoleucine 340.

The protein belongs to the EPSP synthase family. MurA subfamily.

It is found in the cytoplasm. It catalyses the reaction phosphoenolpyruvate + UDP-N-acetyl-alpha-D-glucosamine = UDP-N-acetyl-3-O-(1-carboxyvinyl)-alpha-D-glucosamine + phosphate. It functions in the pathway cell wall biogenesis; peptidoglycan biosynthesis. Functionally, cell wall formation. Adds enolpyruvyl to UDP-N-acetylglucosamine. The polypeptide is UDP-N-acetylglucosamine 1-carboxyvinyltransferase (Bartonella quintana (strain Toulouse) (Rochalimaea quintana)).